The sequence spans 230 residues: Ribonuclease HII (230 aa).

An RNase H type-2 domain is found at 21–212; the sequence is GPVAGVDEVG…VRRVANGSGG (192 aa). Positions 27, 28, and 121 each coordinate a divalent metal cation.

Belongs to the RNase HII family. Mn(2+) serves as cofactor. Requires Mg(2+) as cofactor.

It is found in the cytoplasm. It carries out the reaction Endonucleolytic cleavage to 5'-phosphomonoester.. Endonuclease that specifically degrades the RNA of RNA-DNA hybrids. The polypeptide is Ribonuclease HII (Mycobacterium avium (strain 104)).